The following is a 289-amino-acid chain: ATP synthase gamma chain (289 aa).

The protein belongs to the ATPase gamma chain family. F-type ATPases have 2 components, CF(1) - the catalytic core - and CF(0) - the membrane proton channel. CF(1) has five subunits: alpha(3), beta(3), gamma(1), delta(1), epsilon(1). CF(0) has three main subunits: a, b and c.

The protein resides in the cell inner membrane. Functionally, produces ATP from ADP in the presence of a proton gradient across the membrane. The gamma chain is believed to be important in regulating ATPase activity and the flow of protons through the CF(0) complex. The chain is ATP synthase gamma chain from Polynucleobacter necessarius subsp. necessarius (strain STIR1).